The following is a 118-amino-acid chain: MIQCILVMLGGGIGAVIRGFVTDVFNQKFNTSLPIPTLLINVVGSFCIGLLMGMCLNINWINPFIIVGILGGLTTFSTLSSELVKLLTTPKQINLFILYSILQYGVSFVACLLGYYLF.

The next 2 membrane-spanning stretches (helical) occupy residues 1–21 (MIQCILVMLGGGIGAVIRGFV) and 29–49 (FNTSLPIPTLLINVVGSFCIG). Na(+)-binding residues include Gly-71 and Thr-74. A helical transmembrane segment spans residues 95-115 (LFILYSILQYGVSFVACLLGY).

Belongs to the fluoride channel Fluc/FEX (TC 1.A.43) family.

The protein localises to the cell membrane. It catalyses the reaction fluoride(in) = fluoride(out). With respect to regulation, na(+) is not transported, but it plays an essential structural role and its presence is essential for fluoride channel function. Fluoride-specific ion channel. Important for reducing fluoride concentration in the cell, thus reducing its toxicity. The polypeptide is Fluoride-specific ion channel FluC 1 (Staphylococcus saprophyticus subsp. saprophyticus (strain ATCC 15305 / DSM 20229 / NCIMB 8711 / NCTC 7292 / S-41)).